Reading from the N-terminus, the 348-residue chain is A-type ATP synthase subunit C (348 aa).

This sequence belongs to the V-ATPase V0D/AC39 subunit family. In terms of assembly, has multiple subunits with at least A(3), B(3), C, D, E, F, H, I and proteolipid K(x).

The protein localises to the cell membrane. Its function is as follows. Component of the A-type ATP synthase that produces ATP from ADP in the presence of a proton gradient across the membrane. The sequence is that of A-type ATP synthase subunit C from Haloferax volcanii (strain ATCC 29605 / DSM 3757 / JCM 8879 / NBRC 14742 / NCIMB 2012 / VKM B-1768 / DS2) (Halobacterium volcanii).